A 447-amino-acid chain; its full sequence is Tryptophan 5-hydroxylase 1 (447 aa).

The 76-residue stretch at threonine 22–glutamine 97 folds into the ACT domain. Serine 61 carries the phosphoserine; by PKA modification. L-tryptophan-binding residues include tyrosine 238, arginine 260, and threonine 268. Histidine 275, histidine 280, and glutamate 320 together coordinate Fe cation. L-tryptophan contacts are provided by serine 339 and isoleucine 369.

Belongs to the biopterin-dependent aromatic amino acid hydroxylase family. In terms of assembly, homotetramer. Interacts with DNAJC12. The cofactor is Fe(2+). In terms of processing, ubiquitinated, leading to its degradation by the proteasome. Ubiquitinated is triggered by phosphorylation. Post-translationally, phosphorylated; triggering degradation by the proteasome.

The enzyme catalyses (6R)-L-erythro-5,6,7,8-tetrahydrobiopterin + L-tryptophan + O2 = 5-hydroxy-L-tryptophan + (4aS,6R)-4a-hydroxy-L-erythro-5,6,7,8-tetrahydrobiopterin. The protein operates within aromatic compound metabolism; serotonin biosynthesis; serotonin from L-tryptophan: step 1/2. Its function is as follows. Oxidizes L-tryptophan to 5-hydroxy-l-tryptophan in the rate-determining step of serotonin biosynthesis. The sequence is that of Tryptophan 5-hydroxylase 1 from Mus musculus (Mouse).